Reading from the N-terminus, the 432-residue chain is MPAGRAARTCALLALCLLGAGAQDFGPTRFICTSVPVDADMCAASVAAGGAEELRSSVLQLRETVLQQKETILSQKETIRELTAKLGRCESQSTLDPGAGEARAGGGRKQPGSGKNTMGDLSRTPAAETLSQLGQTLQSLKTRLENLEQYSRLNSSSQTNSLKDLLQSKIDELERQVLSRVNTLEEGKGGPRNDTEERVKIETALTSLHQRISELEKGQKDNRPGDKFQLTFPLRTNYMYAKVKKSLPEMYAFTVCMWLKSSATPGVGTPFSYAVPGQANELVLIEWGNNPMEILINDKVAKLPFVINDGKWHHICVTWTTRDGVWEAYQDGTQGGSGENLAPYHPIKPQGVLVLGQEQDTLGGGFDATQAFVGELAHFNIWDRKLTPGEVYNLATCSTKALSGNVIAWAESHIEIYGGATKWTFEACRQIN.

The first 22 residues, 1–22 (MPAGRAARTCALLALCLLGAGA), serve as a signal peptide directing secretion. Residues 90–122 (ESQSTLDPGAGEARAGGGRKQPGSGKNTMGDLS) form a disordered region. Residues asparagine 154 and asparagine 193 are each glycosylated (N-linked (GlcNAc...) asparagine). The region spanning 226–428 (DKFQLTFPLR…GATKWTFEAC (203 aa)) is the Pentraxin (PTX) domain. Residues cysteine 256 and cysteine 316 are joined by a disulfide bond. Residues asparagine 280, glutamate 358, glutamine 359, aspartate 360, and glutamine 370 each coordinate Ca(2+).

In terms of assembly, homooligomer or heterooligomer (probably pentamer) with neuronal pentraxin receptor (NPTXR). Requires Ca(2+) as cofactor.

The protein resides in the secreted. The protein localises to the cytoplasmic vesicle. It localises to the secretory vesicle. It is found in the endoplasmic reticulum. In terms of biological role, may be involved in mediating uptake of synaptic material during synapse remodeling or in mediating the synaptic clustering of AMPA glutamate receptors at a subset of excitatory synapses. This is Neuronal pentraxin-1 (NPTX1) from Homo sapiens (Human).